The chain runs to 175 residues: Ribosome maturation factor RimM (175 aa).

Residues 96 to 175 (EDEFYWRELF…RIEVDWDPGF (80 aa)) form the PRC barrel domain.

The protein belongs to the RimM family. In terms of assembly, binds ribosomal protein uS19.

It localises to the cytoplasm. An accessory protein needed during the final step in the assembly of 30S ribosomal subunit, possibly for assembly of the head region. Essential for efficient processing of 16S rRNA. May be needed both before and after RbfA during the maturation of 16S rRNA. It has affinity for free ribosomal 30S subunits but not for 70S ribosomes. The sequence is that of Ribosome maturation factor RimM from Aliivibrio fischeri (strain ATCC 700601 / ES114) (Vibrio fischeri).